Here is a 482-residue protein sequence, read N- to C-terminus: Abscisic acid 8'-hydroxylase 2 (482 aa).

The chain crosses the membrane as a helical span at residues 20 to 40; that stretch reads PALITLTIVVVVVVLLFKWWL. Position 431 (Cys-431) interacts with heme.

The protein belongs to the cytochrome P450 family. It depends on heme as a cofactor. As to expression, mainly expressed in dry seeds. Lower expression in rosette leaves, flowers, siliques and stems. Not expressed in roots. Expressed in both endosperm and vascular tissues of embryo during the seed development and in cortex and endodermis in germinating embryo.

The protein localises to the membrane. It carries out the reaction 2-cis-(+)-abscisate + reduced [NADPH--hemoprotein reductase] + O2 = (+)-8'-hydroxyabscisate + oxidized [NADPH--hemoprotein reductase] + H2O + H(+). It functions in the pathway plant hormone degradation; abscisic acid degradation. Its function is as follows. Involved in the oxidative degradation of abscisic acid, but not in the isomerization of the produced 8'-hydroxyabscisic acid (8'-OH-ABA) to (-)-phaseic acid (PA). Involved in the control of seed dormancy and germination. This chain is Abscisic acid 8'-hydroxylase 2 (CYP707A2), found in Arabidopsis thaliana (Mouse-ear cress).